Reading from the N-terminus, the 301-residue chain is Hydroxymycolate synthase MmaA4 (301 aa).

Residues 42–43 (YS), 81–83 (GCG), 103–108 (TLSKNQ), 132–133 (WE), and I145 contribute to the S-adenosyl-L-methionine site. The active site involves C278.

This sequence belongs to the CFA/CMAS family. As to quaternary structure, monomer.

It participates in lipid metabolism; mycolic acid biosynthesis. With respect to regulation, inhibited by S-adenosyl-N-decyl-aminoethyl (SADAE). Functionally, involved in the biosynthesis of hydroxymycolate, a common precursor of oxygenated mycolic acids (methoxy-mycolate and keto-mycolate). Probably transfers a methyl group from the S-adenosylmethionine (SAM) cofactor and, subsequently or simultaneously, a water molecule onto the double bound of ethylene substrates, leading to the formation of the hydroxylated product at the distal position. Involved in the activation of the antitubercular drug thiacetazone (TAC). The chain is Hydroxymycolate synthase MmaA4 (mmaA4) from Mycobacterium tuberculosis (strain ATCC 25618 / H37Rv).